A 684-amino-acid polypeptide reads, in one-letter code: Threonine--tRNA ligase (684 aa).

The 66-residue stretch at 1–66 (MTVPATDSWP…DTDAEVVPVA (66 aa)) folds into the TGS domain. The tract at residues 261 to 567 (DHRKLGSELD…LTEHYAGAFP (307 aa)) is catalytic. Zn(2+) contacts are provided by C366, H417, and H544.

The protein belongs to the class-II aminoacyl-tRNA synthetase family. Homodimer. Zn(2+) is required as a cofactor.

It is found in the cytoplasm. It catalyses the reaction tRNA(Thr) + L-threonine + ATP = L-threonyl-tRNA(Thr) + AMP + diphosphate + H(+). Its function is as follows. Catalyzes the attachment of threonine to tRNA(Thr) in a two-step reaction: L-threonine is first activated by ATP to form Thr-AMP and then transferred to the acceptor end of tRNA(Thr). Also edits incorrectly charged L-seryl-tRNA(Thr). This Mycobacterium avium (strain 104) protein is Threonine--tRNA ligase.